Consider the following 178-residue polypeptide: MARLKSLYNEELKQQIKEELGLANVMQVPKITKITLNMGVGGASQDKKLLEGAVADMTAIAGQKPVVTKARKSVAGFKIREEWPIGCKVTLRGEQMYEFLDRLVAIAIPRIRDFRGFSPKAFDGRGNYSLGIKEQIVFPEVDFDKIDRIRGMDVTITTSAQSDEEGRALLKAFGFPFK.

This sequence belongs to the universal ribosomal protein uL5 family. Part of the 50S ribosomal subunit; part of the 5S rRNA/L5/L18/L25 subcomplex. Contacts the 5S rRNA and the P site tRNA. Forms a bridge to the 30S subunit in the 70S ribosome.

This is one of the proteins that bind and probably mediate the attachment of the 5S RNA into the large ribosomal subunit, where it forms part of the central protuberance. In the 70S ribosome it contacts protein S13 of the 30S subunit (bridge B1b), connecting the 2 subunits; this bridge is implicated in subunit movement. Contacts the P site tRNA; the 5S rRNA and some of its associated proteins might help stabilize positioning of ribosome-bound tRNAs. The sequence is that of Large ribosomal subunit protein uL5 from Psychrobacter arcticus (strain DSM 17307 / VKM B-2377 / 273-4).